We begin with the raw amino-acid sequence, 149 residues long: Calmodulin (149 aa).

Ala2 carries the N-acetylalanine modification. EF-hand domains lie at 8 to 43 (EQIS…LGQN), 44 to 79 (PTEA…KMRD), 81 to 116 (DSEE…LGEK), and 117 to 149 (LTDN…MLSK). Positions 21, 23, 25, 27, 32, 57, 59, 61, 63, 68, 94, 96, 98, 100, 105, 130, 132, 134, 136, and 141 each coordinate Ca(2+).

Belongs to the calmodulin family. Trimethylation of Lys-116 observed in other calmodulins is absent here.

Functionally, calmodulin mediates the control of a large number of enzymes, ion channels and other proteins by Ca(2+). Among the enzymes to be stimulated by the calmodulin-Ca(2+) complex are a number of protein kinases and phosphatases. In Pleurotus cornucopiae (Cornucopia mushroom), this protein is Calmodulin (CMD1).